Here is a 360-residue protein sequence, read N- to C-terminus: Aminomethyltransferase (360 aa).

Belongs to the GcvT family. As to quaternary structure, the glycine cleavage system is composed of four proteins: P, T, L and H.

It carries out the reaction N(6)-[(R)-S(8)-aminomethyldihydrolipoyl]-L-lysyl-[protein] + (6S)-5,6,7,8-tetrahydrofolate = N(6)-[(R)-dihydrolipoyl]-L-lysyl-[protein] + (6R)-5,10-methylene-5,6,7,8-tetrahydrofolate + NH4(+). In terms of biological role, the glycine cleavage system catalyzes the degradation of glycine. The sequence is that of Aminomethyltransferase from Bdellovibrio bacteriovorus (strain ATCC 15356 / DSM 50701 / NCIMB 9529 / HD100).